Consider the following 35-residue polypeptide: Photosystem II reaction center protein M (35 aa).

Residue Met-1 is modified to N-formylmethionine. The helical transmembrane segment at 7–28 (GFIASILFVLVPTVFLLILFIQ) threads the bilayer.

Belongs to the PsbM family. In terms of assembly, PSII is composed of 1 copy each of membrane proteins PsbA, PsbB, PsbC, PsbD, PsbE, PsbF, PsbH, PsbI, PsbJ, PsbK, PsbL, PsbM, PsbT, PsbX, PsbY, PsbZ, Psb30/Ycf12, peripheral proteins PsbO, CyanoQ (PsbQ), PsbU, PsbV and a large number of cofactors. It forms dimeric complexes.

The protein resides in the cellular thylakoid membrane. One of the components of the core complex of photosystem II (PSII). PSII is a light-driven water:plastoquinone oxidoreductase that uses light energy to abstract electrons from H(2)O, generating O(2) and a proton gradient subsequently used for ATP formation. It consists of a core antenna complex that captures photons, and an electron transfer chain that converts photonic excitation into a charge separation. This subunit is found at the monomer-monomer interface. Involved in assembly of monomeric PSII from the CP43-less intermediate. The protein is Photosystem II reaction center protein M of Synechocystis sp. (strain ATCC 27184 / PCC 6803 / Kazusa).